The sequence spans 129 residues: Fluoride-specific ion channel FluC 2 (129 aa).

A run of 4 helical transmembrane segments spans residues 4–24, 39–59, 65–85, and 100–120; these read LDVMWVGLGGGVGSLGRWWIG, TFLINISGAFVIGYLSVLFGV, YGTMLNAGVLTGILGGYTTFS, and GGLAVFYLVASVLSGLFAAWL. Na(+) contacts are provided by G79 and T82.

This sequence belongs to the fluoride channel Fluc/FEX (TC 1.A.43) family.

The protein resides in the cell inner membrane. It carries out the reaction fluoride(in) = fluoride(out). Na(+) is not transported, but it plays an essential structural role and its presence is essential for fluoride channel function. Its function is as follows. Fluoride-specific ion channel. Important for reducing fluoride concentration in the cell, thus reducing its toxicity. The chain is Fluoride-specific ion channel FluC 2 from Brucella suis biovar 1 (strain 1330).